Consider the following 397-residue polypeptide: Elongation factor Tu (397 aa).

Positions 10–206 (KPHVNIGTIG…AVDEYIPTPE (197 aa)) constitute a tr-type G domain. Residues 19-26 (GHIDHGKT) form a G1 region. GTP is bound at residue 19 to 26 (GHIDHGKT). Mg(2+) is bound at residue Thr-26. Positions 62–66 (GITIS) are G2. The G3 stretch occupies residues 83 to 86 (DCPG). GTP-binding positions include 83–87 (DCPGH) and 138–141 (NKCD). Residues 138–141 (NKCD) are G4. A G5 region spans residues 176–178 (AAF).

This sequence belongs to the TRAFAC class translation factor GTPase superfamily. Classic translation factor GTPase family. EF-Tu/EF-1A subfamily. As to quaternary structure, monomer.

The protein resides in the cytoplasm. It catalyses the reaction GTP + H2O = GDP + phosphate + H(+). Functionally, GTP hydrolase that promotes the GTP-dependent binding of aminoacyl-tRNA to the A-site of ribosomes during protein biosynthesis. This Nocardioides sp. (strain ATCC BAA-499 / JS614) protein is Elongation factor Tu.